Consider the following 276-residue polypeptide: Formamidopyrimidine-DNA glycosylase (276 aa).

Pro2 functions as the Schiff-base intermediate with DNA in the catalytic mechanism. The Proton donor role is filled by Glu3. Lys60 (proton donor; for beta-elimination activity) is an active-site residue. DNA-binding residues include His93 and Arg112. An FPG-type zinc finger spans residues 240–274 (NVYGKKGEPCVTCGTILEKTVVGGRGTHYCPICQP). The active-site Proton donor; for delta-elimination activity is the Arg264.

This sequence belongs to the FPG family. Monomer. It depends on Zn(2+) as a cofactor.

It catalyses the reaction Hydrolysis of DNA containing ring-opened 7-methylguanine residues, releasing 2,6-diamino-4-hydroxy-5-(N-methyl)formamidopyrimidine.. It carries out the reaction 2'-deoxyribonucleotide-(2'-deoxyribose 5'-phosphate)-2'-deoxyribonucleotide-DNA = a 3'-end 2'-deoxyribonucleotide-(2,3-dehydro-2,3-deoxyribose 5'-phosphate)-DNA + a 5'-end 5'-phospho-2'-deoxyribonucleoside-DNA + H(+). In terms of biological role, involved in base excision repair of DNA damaged by oxidation or by mutagenic agents. Acts as a DNA glycosylase that recognizes and removes damaged bases. Has a preference for oxidized purines, such as 7,8-dihydro-8-oxoguanine (8-oxoG). Has AP (apurinic/apyrimidinic) lyase activity and introduces nicks in the DNA strand. Cleaves the DNA backbone by beta-delta elimination to generate a single-strand break at the site of the removed base with both 3'- and 5'-phosphates. This chain is Formamidopyrimidine-DNA glycosylase, found in Bacillus anthracis.